The chain runs to 162 residues: Mitochondrial fission process protein 1 (162 aa).

A run of 3 helical transmembrane segments spans residues 36–56, 81–101, and 128–148; these read SLVK…YVAA, AIIA…IPGF, and TVTA…DAFV.

The protein belongs to the MTFP1 family.

The protein localises to the mitochondrion inner membrane. Its function is as follows. Involved in the mitochondrial division probably by regulating membrane fission. Loss-of-function leads to apoptosis. This chain is Mitochondrial fission process protein 1, found in Caenorhabditis briggsae.